Here is a 177-residue protein sequence, read N- to C-terminus: Ubiquinol-cytochrome c reductase iron-sulfur subunit (177 aa).

A helical membrane pass occupies residues 18 to 38; sequence MVLTASSVAAIGAVCTLWPLV. One can recognise a Rieske domain in the interval 88 to 175; sequence ARAVKMSELI…YTFISDKKIR (88 aa). [2Fe-2S] cluster contacts are provided by Cys-120, His-122, Cys-139, and His-142. Cysteines 125 and 141 form a disulfide.

Belongs to the Rieske iron-sulfur protein family. In terms of assembly, the main subunits of complex b-c1 are: cytochrome b, cytochrome c1 and the Rieske protein. The cofactor is [2Fe-2S] cluster.

It is found in the cell membrane. The enzyme catalyses a quinol + 2 Fe(III)-[cytochrome c](out) = a quinone + 2 Fe(II)-[cytochrome c](out) + 2 H(+)(out). In terms of biological role, component of the ubiquinol-cytochrome c reductase complex (complex III or cytochrome b-c1 complex), which is a respiratory chain that generates an electrochemical potential coupled to ATP synthesis. This chain is Ubiquinol-cytochrome c reductase iron-sulfur subunit (petA), found in Rickettsia conorii (strain ATCC VR-613 / Malish 7).